The chain runs to 235 residues: Transcriptional regulatory protein WalR (235 aa).

One can recognise a Response regulatory domain in the interval 4 to 117 (KILVVDDEKP…ELLARVKANL (114 aa)). At Asp-53 the chain carries 4-aspartylphosphate. Positions 132–231 (SNEIHIGSLV…RRGVGYYLRN (100 aa)) form a DNA-binding region, ompR/PhoB-type.

As to quaternary structure, homodimer. Phosphorylated by WalK.

It is found in the cytoplasm. In terms of biological role, member of the two-component regulatory system WalK/WalR involved in the regulation of the ftsAZ operon, the yocH, ykvT, cwlO, lytE, ydjM, yjeA, yoeB genes and the tagAB and tagDEF operons. Binds to the ftsAZ P1 promoter sequence in vitro. WalR has been shown to directly bind to the regulatory regions of yocH, ykvT, tagAB/tagDEF. Activates cwlO, lytE and ydjM and represses yoeB and yjeA. This is Transcriptional regulatory protein WalR from Bacillus subtilis (strain 168).